The primary structure comprises 194 residues: Type II secretion system protein H (194 aa).

A propeptide spans 1–6 (MTATRG) (leader sequence). An N-methylphenylalanine modification is found at Phe7. The chain crosses the membrane as a helical span at residues 12–32 (ILLVLVLVSASAVAVIATFPV).

This sequence belongs to the GSP H family. Type II secretion is composed of four main components: the outer membrane complex, the inner membrane complex, the cytoplasmic secretion ATPase and the periplasm-spanning pseudopilus. Interacts with core component EpsG. Post-translationally, cleaved by prepilin peptidase. Methylated by prepilin peptidase at the amino group of the N-terminal phenylalanine once the leader sequence is cleaved by prepilin peptidase.

It is found in the cell inner membrane. Its function is as follows. Component of the type II secretion system required for the energy-dependent secretion of extracellular factors such as proteases and toxins from the periplasm. Part of the pseudopilus tip complex that is critical for the recognition and binding of secretion substrates. This chain is Type II secretion system protein H (epsH), found in Vibrio cholerae serotype O1 (strain ATCC 39315 / El Tor Inaba N16961).